A 467-amino-acid polypeptide reads, in one-letter code: Probable apyrase 2 (467 aa).

Over Met1–Arg25 the chain is Cytoplasmic. A helical; Signal-anchor for type II membrane protein membrane pass occupies residues Gly26 to Pro46. At Arg47 to Ser467 the chain is on the extracellular side. Residue Val70–Arg80 participates in ATP binding. Catalysis depends on Glu192, which acts as the Proton acceptor. Gly216–Gln226 serves as a coordination point for ATP.

It belongs to the GDA1/CD39 NTPase family. The cofactor is Ca(2+).

The protein resides in the membrane. It catalyses the reaction a ribonucleoside 5'-triphosphate + 2 H2O = a ribonucleoside 5'-phosphate + 2 phosphate + 2 H(+). Catalyzes the hydrolysis of phosphoanhydride bonds of nucleoside tri- and di-phosphates. The chain is Probable apyrase 2 (APY2) from Oryza sativa subsp. japonica (Rice).